A 104-amino-acid polypeptide reads, in one-letter code: Protein translation factor SUI1 homolog (104 aa).

It belongs to the SUI1 family.

This chain is Protein translation factor SUI1 homolog, found in Ignicoccus hospitalis (strain KIN4/I / DSM 18386 / JCM 14125).